Reading from the N-terminus, the 131-residue chain is Hyastatin (131 aa).

A signal peptide spans 1-16; sequence MRVLLILVSLAALAHA. 3 cysteine pairs are disulfide-bonded: C103–C117, C107–C124, and C118–C125. K130 carries the lysine amide modification.

Strongly expressed in hemocytes, with weaker expression in gills and epidermis. Expressed at low levels in hepatopancreas.

The protein resides in the cytoplasmic granule. In terms of biological role, antimicrobial peptide. Has strong antibacterial activity against the Gram-positive bacterium C.glutamicum (MIC=0.4 uM) and the Gram-negative bacterium E.coli (MIC=12.5 uM). Has weak antibacterial activity against the Gram-positive bacterium S.aureus (MIC&gt;50 uM) and the Gram-negative bacterium P.aeruginosa (MIC&gt;50 uM). Has antifungal activity against S.cerevisiae (MIC=12.5) and C.albicans (MIC=6.3 uM). Has weak antifungal activity against the mold B.cinerea. Presents chitin-binding activity. This Hyas araneus (Atlantic lyre crab) protein is Hyastatin.